The primary structure comprises 734 residues: Methionine--tRNA ligase (734 aa).

The short motif at 12–22 (PYVNNIPHLGN) is the 'HIGH' region element. Zn(2+) contacts are provided by cysteine 143, cysteine 146, cysteine 155, and cysteine 158. A 'KMSKS' region motif is present at residues 330-334 (KFSKS). Lysine 333 contacts ATP. Residues 570–675 (FREKVLLRVV…QNPIAGERII (106 aa)) form the tRNA-binding domain.

Belongs to the class-I aminoacyl-tRNA synthetase family. MetG type 1 subfamily. Homodimer. The cofactor is Zn(2+).

Its subcellular location is the cytoplasm. It catalyses the reaction tRNA(Met) + L-methionine + ATP = L-methionyl-tRNA(Met) + AMP + diphosphate. Is required not only for elongation of protein synthesis but also for the initiation of all mRNA translation through initiator tRNA(fMet) aminoacylation. The protein is Methionine--tRNA ligase of Borreliella burgdorferi (strain ZS7) (Borrelia burgdorferi).